The primary structure comprises 660 residues: Bifunctional polymyxin resistance protein ArnA (660 aa).

Residues 1-304 (MKTVVFAYHD…TLGLVQGSRL (304 aa)) are formyltransferase ArnAFT. 86–88 (HLI) serves as a coordination point for (6R)-10-formyltetrahydrofolate. The active-site Proton donor; for formyltransferase activity is histidine 104. Residues arginine 114 and 136 to 140 (VKRAD) contribute to the (6R)-10-formyltetrahydrofolate site. The tract at residues 314–660 (RRTRVLILGV…RTVDLTDKPS (347 aa)) is dehydrogenase ArnADH. NAD(+) is bound by residues aspartate 347 and 368 to 369 (DI). UDP-alpha-D-glucuronate-binding positions include alanine 393, tyrosine 398, and 432-433 (TS). Glutamate 434 (proton acceptor; for decarboxylase activity) is an active-site residue. Residues arginine 460, asparagine 492, 526 to 535 (KLIDGGKQKR), and tyrosine 613 contribute to the UDP-alpha-D-glucuronate site. The active-site Proton donor; for decarboxylase activity is arginine 619.

The protein in the N-terminal section; belongs to the Fmt family. UDP-L-Ara4N formyltransferase subfamily. In the C-terminal section; belongs to the NAD(P)-dependent epimerase/dehydratase family. UDP-glucuronic acid decarboxylase subfamily. In terms of assembly, homohexamer, formed by a dimer of trimers.

The catalysed reaction is UDP-alpha-D-glucuronate + NAD(+) = UDP-beta-L-threo-pentopyranos-4-ulose + CO2 + NADH. The enzyme catalyses UDP-4-amino-4-deoxy-beta-L-arabinose + (6R)-10-formyltetrahydrofolate = UDP-4-deoxy-4-formamido-beta-L-arabinose + (6S)-5,6,7,8-tetrahydrofolate + H(+). It functions in the pathway nucleotide-sugar biosynthesis; UDP-4-deoxy-4-formamido-beta-L-arabinose biosynthesis; UDP-4-deoxy-4-formamido-beta-L-arabinose from UDP-alpha-D-glucuronate: step 1/3. The protein operates within nucleotide-sugar biosynthesis; UDP-4-deoxy-4-formamido-beta-L-arabinose biosynthesis; UDP-4-deoxy-4-formamido-beta-L-arabinose from UDP-alpha-D-glucuronate: step 3/3. It participates in bacterial outer membrane biogenesis; lipopolysaccharide biosynthesis. Its function is as follows. Bifunctional enzyme that catalyzes the oxidative decarboxylation of UDP-glucuronic acid (UDP-GlcUA) to UDP-4-keto-arabinose (UDP-Ara4O) and the addition of a formyl group to UDP-4-amino-4-deoxy-L-arabinose (UDP-L-Ara4N) to form UDP-L-4-formamido-arabinose (UDP-L-Ara4FN). The modified arabinose is attached to lipid A and is required for resistance to polymyxin and cationic antimicrobial peptides. The sequence is that of Bifunctional polymyxin resistance protein ArnA from Escherichia coli O1:K1 / APEC.